A 115-amino-acid polypeptide reads, in one-letter code: Histidine decarboxylase proenzyme (115 aa).

Position 83 is a pyruvic acid (Ser) (S83).

In terms of assembly, the proenzyme is a hexamer of identical pi chains; each pi chain monomer is cleaved to form a small (or beta) chain and a large (or alpha) chain by non-hydrolytic self-catalysis. It depends on pyruvate as a cofactor.

It carries out the reaction L-histidine + H(+) = histamine + CO2. This Lentilactobacillus buchneri (Lactobacillus buchneri) protein is Histidine decarboxylase proenzyme.